The primary structure comprises 344 residues: Anthranilate phosphoribosyltransferase (344 aa).

Residues Gly-80, 83–84 (GD), Thr-88, 90–93 (NVST), 108–116 (KHGNRSVSS), and Ser-120 each bind 5-phospho-alpha-D-ribose 1-diphosphate. Gly-80 contributes to the anthranilate binding site. Ser-92 lines the Mg(2+) pocket. Asn-111 serves as a coordination point for anthranilate. Arg-166 contacts anthranilate. Mg(2+) contacts are provided by Asp-225 and Glu-226.

The protein belongs to the anthranilate phosphoribosyltransferase family. Homodimer. Mg(2+) serves as cofactor.

The enzyme catalyses N-(5-phospho-beta-D-ribosyl)anthranilate + diphosphate = 5-phospho-alpha-D-ribose 1-diphosphate + anthranilate. It functions in the pathway amino-acid biosynthesis; L-tryptophan biosynthesis; L-tryptophan from chorismate: step 2/5. In terms of biological role, catalyzes the transfer of the phosphoribosyl group of 5-phosphorylribose-1-pyrophosphate (PRPP) to anthranilate to yield N-(5'-phosphoribosyl)-anthranilate (PRA). The sequence is that of Anthranilate phosphoribosyltransferase from Legionella pneumophila (strain Paris).